The sequence spans 279 residues: Ankyrin repeat domain-containing protein 7 (279 aa).

Basic residues predominate over residues 1–11 (MKKFFPFRGKR). Residues 1 to 25 (MKKFFPFRGKRKTDDSHSHSSEVPI) are disordered. ANK repeat units follow at residues 80-109 (RSRTPLHLACANGYTNIVSLLIENQCKINV), 113-142 (ENRTPLIKAVECQQESCATVLLLHGADPNL), 146-175 (YSNTALHYAVCGQNISLANKLLQYKANLEA), 179-208 (DGHTPLLLAVAENNENMVKFLLKKGADVNA), and 212-241 (NHRTAIMIALIVEPTSSVKLLLQQDTDLAH).

This chain is Ankyrin repeat domain-containing protein 7 (Ankrd7), found in Mus musculus (Mouse).